The primary structure comprises 157 residues: Ubiquitin-like protein 4A (157 aa).

Residues 1-76 (MQLTVKALQG…LNLVVKPLEK (76 aa)) form the Ubiquitin-like domain. Lysine 48 participates in a covalent cross-link: Glycyl lysine isopeptide (Lys-Gly) (interchain with G-Cter in ubiquitin). Residue serine 90 is modified to Phosphoserine. The interval 96 to 138 (WQLISKVLARHFSAADASRVLEQLQRDYERSLSRLTLDDIERL) is required and sufficient for interaction with BAG6.

As to quaternary structure, component of the BAG6/BAT3 complex, at least composed of BAG6, UBL4A and GET4/TRC35. Interacts with BAG6; the interaction is direct and required for UBL4A protein stability. Interacts with USP13; may be indirect via BAG6. Polyubiquitinated. Ubiquitination by AMFR and deubiquitination by USP13 may regulate the interaction between the BAG6/BAT complex and SGTA and therefore may regulate client proteins fate.

It is found in the cytoplasm. Its subcellular location is the cytosol. The protein resides in the nucleus. Functionally, as part of a cytosolic protein quality control complex, the BAG6/BAT3 complex, maintains misfolded and hydrophobic patches-containing proteins in a soluble state and participates in their proper delivery to the endoplasmic reticulum or alternatively can promote their sorting to the proteasome where they undergo degradation. The BAG6/BAT3 complex is involved in the post-translational delivery of tail-anchored/type II transmembrane proteins to the endoplasmic reticulum membrane. Recruited to ribosomes, it interacts with the transmembrane region of newly synthesized tail-anchored proteins and together with SGTA and ASNA1 mediates their delivery to the endoplasmic reticulum. Client proteins that cannot be properly delivered to the endoplasmic reticulum are ubiquitinated and sorted to the proteasome. Similarly, the BAG6/BAT3 complex also functions as a sorting platform for proteins of the secretory pathway that are mislocalized to the cytosol either delivering them to the proteasome for degradation or to the endoplasmic reticulum. The BAG6/BAT3 complex also plays a role in the endoplasmic reticulum-associated degradation (ERAD), a quality control mechanism that eliminates unwanted proteins of the endoplasmic reticulum through their retrotranslocation to the cytosol and their targeting to the proteasome. It maintains these retrotranslocated proteins in an unfolded yet soluble state condition in the cytosol to ensure their proper delivery to the proteasome. The sequence is that of Ubiquitin-like protein 4A (UBL4A) from Callithrix jacchus (White-tufted-ear marmoset).